A 1101-amino-acid polypeptide reads, in one-letter code: Type VI secretion system component TssM1 (1101 aa).

A helical transmembrane segment spans residues Leu-371–Ile-391.

It is found in the cell inner membrane. Functionally, core component of the type VI (T6SS) secretion system that plays a role in the release of toxins targeting both eukaryotic and prokaryotic species. Plays an essential role in stabilization of assembled TssK1 structure at a fixed perimembrane site. This is Type VI secretion system component TssM1 from Pseudomonas aeruginosa (strain ATCC 15692 / DSM 22644 / CIP 104116 / JCM 14847 / LMG 12228 / 1C / PRS 101 / PAO1).